A 163-amino-acid polypeptide reads, in one-letter code: Small heat shock protein C4 (163 aa).

A sHSP domain is found at 53–163; that stretch reads YNNKILSPRT…QSKAKKIKIS (111 aa).

Belongs to the small heat shock protein (HSP20) family.

The polypeptide is Small heat shock protein C4 (hspc4-1) (Rickettsia felis (strain ATCC VR-1525 / URRWXCal2) (Rickettsia azadi)).